We begin with the raw amino-acid sequence, 627 residues long: MAFVSIAPLASRCCVHKSFVSSREVKPLCRTIPTLGRCRRGKTVTPSISMCWTATVLDDGVQRRIANHHSNLWHDSFIQSLSTPYGETSYLERADKLIGEVKEIINSISVEDGELITPLNDLIQRLSIVDNIERLGIDRHFKNEIKSVLDYVYSYWNEKGIGCGRESVITDLNSTALGLRTLRLHGYPVSSDVLEQFKDQNGQFACSAIQTEGEIKSVLNLFRASLIAFPGEKVMEDAEIFSTIYLKEALLTIPVCSLSREIAYVLEHGWHTNLPRLEARNYIDVFGQDPIYGTPNIKMTQKLLEIAKLEFNIFHSLQQKELKHLSRWWKDSVFSQLTFPRHRHVEYYTLASCIDIDPQHSSFRLGFAKISHLGTVLDDIYDTFGTMDELELFTAALKRWHPSATKWLPEYMKGVYMMLYETVNEMAREADKSQGRDTLNYARQAWEAYIDSYMKEAKWISSGFLPTFEEYLDNGKVSFGYRIGTLQPILTLGTPFPHHILQEIDFPSSLNRLACSILRLKGDIHTYQAERSRGEKSSCISCYMKDNPGSTEEDAVTYINAMVNKSLKELNWEFLRPDSNAPITSKKHAFDILRAFYHLYKHRDGFSVARNEIRNLVKTTVIEPVPL.

Residues 1-21 (MAFVSIAPLASRCCVHKSFVS) constitute a chloroplast transit peptide. 3 residues coordinate Mg(2+): Asp378, Asp382, and Glu530. Positions 378-382 (DDIYD) match the DDXXD motif motif.

The protein belongs to the terpene synthase family. Tpsd subfamily. Mg(2+) is required as a cofactor. It depends on Mn(2+) as a cofactor.

The protein localises to the plastid. It localises to the chloroplast. The enzyme catalyses (2E)-geranyl diphosphate + H2O = (R)-linalool + diphosphate. Its pathway is terpene metabolism; oleoresin biosynthesis. Terpene synthase (TPS) involved in the biosynthesis of monoterpene natural products included in conifer oleoresin secretions and volatile emissions; these compounds contribute to biotic and abiotic stress defense against herbivores and pathogens. Catalyzes the conversion of (2E)-geranyl diphosphate (GPP) to (R)-linalool. The protein is (R)-linalool synthase 1, chloroplastic of Picea sitchensis (Sitka spruce).